The sequence spans 302 residues: Small ribosomal subunit protein uS3 (302 aa).

The KH type-2 domain maps to 17–86 (IDEFFAEELA…DPQIDVQEVE (70 aa)). The disordered stretch occupies residues 222-302 (EDADAEDADA…EMDDEDGGAE (81 aa)).

The protein belongs to the universal ribosomal protein uS3 family. In terms of assembly, part of the 30S ribosomal subunit.

Its function is as follows. Binds the lower part of the 30S subunit head. This Halobacterium salinarum (strain ATCC 700922 / JCM 11081 / NRC-1) (Halobacterium halobium) protein is Small ribosomal subunit protein uS3.